Reading from the N-terminus, the 477-residue chain is Cysteine--tRNA ligase (477 aa).

Position 34 (C34) interacts with Zn(2+). The short motif at 36 to 46 (PTVYDFAHIGN) is the 'HIGH' region element. Zn(2+)-binding residues include C235, H260, and E264. A 'KMSKS' region motif is present at residues 293–297 (KMSKS). K296 contributes to the ATP binding site.

The protein belongs to the class-I aminoacyl-tRNA synthetase family. As to quaternary structure, monomer. Requires Zn(2+) as cofactor.

It is found in the cytoplasm. The enzyme catalyses tRNA(Cys) + L-cysteine + ATP = L-cysteinyl-tRNA(Cys) + AMP + diphosphate. The chain is Cysteine--tRNA ligase from Mesorhizobium japonicum (strain LMG 29417 / CECT 9101 / MAFF 303099) (Mesorhizobium loti (strain MAFF 303099)).